The chain runs to 155 residues: NADPH-dependent 7-cyano-7-deazaguanine reductase (155 aa).

The Thioimide intermediate role is filled by C53. The active-site Proton donor is the D60. Residues V75 to S77 and H94 to E95 each bind substrate.

The protein belongs to the GTP cyclohydrolase I family. QueF type 1 subfamily.

It localises to the cytoplasm. The catalysed reaction is 7-aminomethyl-7-carbaguanine + 2 NADP(+) = 7-cyano-7-deazaguanine + 2 NADPH + 3 H(+). It functions in the pathway tRNA modification; tRNA-queuosine biosynthesis. Functionally, catalyzes the NADPH-dependent reduction of 7-cyano-7-deazaguanine (preQ0) to 7-aminomethyl-7-deazaguanine (preQ1). In Brucella anthropi (strain ATCC 49188 / DSM 6882 / CCUG 24695 / JCM 21032 / LMG 3331 / NBRC 15819 / NCTC 12168 / Alc 37) (Ochrobactrum anthropi), this protein is NADPH-dependent 7-cyano-7-deazaguanine reductase.